A 424-amino-acid chain; its full sequence is Histidine--tRNA ligase (424 aa).

The protein belongs to the class-II aminoacyl-tRNA synthetase family. Homodimer.

The protein resides in the cytoplasm. It carries out the reaction tRNA(His) + L-histidine + ATP = L-histidyl-tRNA(His) + AMP + diphosphate + H(+). The sequence is that of Histidine--tRNA ligase from Francisella philomiragia subsp. philomiragia (strain ATCC 25017 / CCUG 19701 / FSC 153 / O#319-036).